The chain runs to 455 residues: L-serine dehydratase (455 aa).

Belongs to the iron-sulfur dependent L-serine dehydratase family. It depends on [4Fe-4S] cluster as a cofactor.

It carries out the reaction L-serine = pyruvate + NH4(+). It functions in the pathway carbohydrate biosynthesis; gluconeogenesis. The protein is L-serine dehydratase (sdaA) of Streptomyces coelicolor (strain ATCC BAA-471 / A3(2) / M145).